Here is a 421-residue protein sequence, read N- to C-terminus: Glutamyl-tRNA reductase (421 aa).

Substrate-binding positions include 49–52, Ser109, 114–116, and Gln120; these read TCNR and EPQ. The active-site Nucleophile is Cys50. 189-194 provides a ligand contact to NADP(+); sequence GAGKMS.

This sequence belongs to the glutamyl-tRNA reductase family. Homodimer.

The catalysed reaction is (S)-4-amino-5-oxopentanoate + tRNA(Glu) + NADP(+) = L-glutamyl-tRNA(Glu) + NADPH + H(+). It functions in the pathway porphyrin-containing compound metabolism; protoporphyrin-IX biosynthesis; 5-aminolevulinate from L-glutamyl-tRNA(Glu): step 1/2. In terms of biological role, catalyzes the NADPH-dependent reduction of glutamyl-tRNA(Glu) to glutamate 1-semialdehyde (GSA). In Solibacter usitatus (strain Ellin6076), this protein is Glutamyl-tRNA reductase.